The primary structure comprises 98 residues: Keratinocyte differentiation-associated protein (98 aa).

The signal sequence occupies residues 1–22 (MKIPILPIVALLSLLALHAAQG).

In terms of tissue distribution, ubiquitously expressed in stratified epithelium.

Its subcellular location is the secreted. Its function is as follows. May act as a soluble regulator of keratinocyte differentiation. May play an important role in embryonic skin morphogenesis. This chain is Keratinocyte differentiation-associated protein, found in Rattus norvegicus (Rat).